The chain runs to 78 residues: Ferredoxin oxidoreductase 2 subunit ForD (78 aa).

2 4Fe-4S ferredoxin-type domains span residues 3 to 35 (FVAD…FKAS) and 37 to 66 (NSAW…HCIE). [4Fe-4S] cluster-binding residues include cysteine 12, cysteine 17, cysteine 20, cysteine 24, cysteine 46, cysteine 49, cysteine 52, and cysteine 56.

Heterotetramer of one alpha, one beta, one delta and one gamma chain. The cofactor is [4Fe-4S] cluster.

The chain is Ferredoxin oxidoreductase 2 subunit ForD (forD2) from Aquifex aeolicus (strain VF5).